Here is a 64-residue protein sequence, read N- to C-terminus: Beta-defensin 5 (64 aa).

A signal peptide spans 1–23 (MKIHYLLFAFLLVLLSPLAGVFS). Cystine bridges form between C32/C60, C39/C53, and C43/C61.

Belongs to the beta-defensin family.

The protein resides in the secreted. Has antibacterial activity. In Mus musculus (Mouse), this protein is Beta-defensin 5 (Defb5).